A 599-amino-acid chain; its full sequence is Glycerophosphodiester phosphodiesterase domain-containing protein 5 (599 aa).

Residues 1 to 42 (MVKHQPLQYYEPQLCLSCLTGIYGCRWKRYQRSHDDTTKWER) lie on the Cytoplasmic side of the membrane. Intrachain disulfides connect Cys15–Cys18 and Cys25–Cys576. A helical membrane pass occupies residues 43-63 (LWFLILTSSFFLTLVWFYFWW). The Extracellular portion of the chain corresponds to 64-87 (EVHNDYNEINWFLYNRMGYWSDWS). A helical membrane pass occupies residues 88-108 (IPILVTTAAGFTYITVLLILA). The Cytoplasmic segment spans residues 109-125 (LCHIAVGQQMNLHWLHK). The chain crosses the membrane as a helical span at residues 126-146 (IGLMTTLITTVVTMSSIAQLW). Over 147 to 160 (DDEWEMVFISLQAT) the chain is Extracellular. Residues 161 to 181 (APFLHIGALAAVTALSWLIAG) form a helical membrane-spanning segment. At 182–192 (QFARMEKATSQ) the chain is on the cytoplasmic side. A helical membrane pass occupies residues 193–213 (MLMVTAYLAVVVALYLVPLTI). Residues 214-497 (SSPCIMEKKA…IWLMPPDEYR (284 aa)) lie on the Extracellular side of the membrane. A GP-PDE domain is found at 228–485 (PAIIGHRGAP…DSSHVLRKVP (258 aa)). N-linked (GlcNAc...) asparagine glycans are attached at residues Asn301, Asn336, Asn352, Asn374, and Asn448. Residues 498-518 (LIWITSDLISFIIIVGVFIFQ) traverse the membrane as a helical segment. The Cytoplasmic portion of the chain corresponds to 519–599 (NYHNDQWRLG…DHRDTRLRMN (81 aa)).

It belongs to the glycerophosphoryl diester phosphodiesterase family. As to quaternary structure, interacts with PRDX1; forms a mixed-disulfide with PRDX1, leading to disrupt intramolecular disulfide bond between Cys-25 and Cys-576. Intramolecular disulfide bond between Cys-25 and Cys-576 is reduced by PRDX1. As to expression, detected in mature motor neurons.

It is found in the endomembrane system. The protein resides in the cytoplasm. Its subcellular location is the perinuclear region. The protein localises to the cell projection. It localises to the growth cone. It carries out the reaction a 1,2-diacyl-sn-glycero-3-phospho-(1D-myo-inositol-4,5-bisphosphate) + H2O = 1D-myo-inositol 1,4,5-trisphosphate + a 1,2-diacyl-sn-glycerol + H(+). The enzyme catalyses sn-glycerol 3-phosphocholine + H2O = sn-glycerol 3-phosphate + choline + H(+). Its activity is regulated as follows. Activated by PRDX1 by reduction of an intramolecular disulfide bond. Functionally, glycerophosphodiester phosphodiesterase that promotes cell cycle exit and drives spinal motor neuron differentiation. Mediates the cleavage of glycosylphosphatidylinositol (GPI) anchor of target proteins: removes the GPI-anchor of RECK, leading to release RECK from the plasma membrane. May contribute to the osmotic regulation of cellular glycerophosphocholine. The chain is Glycerophosphodiester phosphodiesterase domain-containing protein 5 (GDPD5) from Gallus gallus (Chicken).